The primary structure comprises 122 residues: Small ribosomal subunit protein uS13 (122 aa).

Residues 95-122 are disordered; that stretch reads GLPVRGQRTRTNARTRKGPRKTVAKKKK.

This sequence belongs to the universal ribosomal protein uS13 family. In terms of assembly, part of the 30S ribosomal subunit. Forms a loose heterodimer with protein S19. Forms two bridges to the 50S subunit in the 70S ribosome.

Functionally, located at the top of the head of the 30S subunit, it contacts several helices of the 16S rRNA. In the 70S ribosome it contacts the 23S rRNA (bridge B1a) and protein L5 of the 50S subunit (bridge B1b), connecting the 2 subunits; these bridges are implicated in subunit movement. Contacts the tRNAs in the A and P-sites. This is Small ribosomal subunit protein uS13 from Thermoanaerobacter pseudethanolicus (strain ATCC 33223 / 39E) (Clostridium thermohydrosulfuricum).